A 541-amino-acid polypeptide reads, in one-letter code: Transcription termination factor MTERF4, chloroplastic (541 aa).

A chloroplast-targeting transit peptide spans 1–45 (MKIRFCNGFTKPGFLLVHFEPPSFFAVRSRSLSDSTYGNLCNHKK). Disordered regions lie at residues 66 to 103 (SRSL…SLYS) and 503 to 541 (EVET…EEFA). Positions 85–99 (GRDRDRDKDKGRDSK) are enriched in basic and acidic residues. Polar residues predominate over residues 507 to 517 (DPSSFDMNTLM). Acidic residues predominate over residues 521 to 541 (REEESDSEYEEEEDDDDEEFA).

It belongs to the mTERF family.

The protein resides in the plastid. The protein localises to the chloroplast. It is found in the mitochondrion. Functionally, transcription termination factor required for processing and steady-state levels of plastid transcripts. Required for splicing of the chloroplastic Clp protease (ClpP) group IIa intron. Required for maturation of 16S rRNA and 23S rRNA in the chloroplast. Essential for embryogenesis. Required for the maintenance of the correct levels of transcripts in the mitochondria and chloroplasts. This Arabidopsis thaliana (Mouse-ear cress) protein is Transcription termination factor MTERF4, chloroplastic.